The following is an 86-amino-acid chain: Large ribosomal subunit protein bL31B (86 aa).

This sequence belongs to the bacterial ribosomal protein bL31 family. Type B subfamily. As to quaternary structure, part of the 50S ribosomal subunit.

In Yersinia pseudotuberculosis serotype O:1b (strain IP 31758), this protein is Large ribosomal subunit protein bL31B.